The chain runs to 275 residues: Phosphonoacetaldehyde hydrolase (275 aa).

The active-site Nucleophile is Asp15. Asp15 and Ala17 together coordinate Mg(2+). Residue Lys56 is the Schiff-base intermediate with substrate of the active site. Asp189 provides a ligand contact to Mg(2+).

The protein belongs to the HAD-like hydrolase superfamily. PhnX family. As to quaternary structure, homodimer. Requires Mg(2+) as cofactor.

The enzyme catalyses phosphonoacetaldehyde + H2O = acetaldehyde + phosphate + H(+). In terms of biological role, involved in phosphonate degradation. The protein is Phosphonoacetaldehyde hydrolase of Pseudomonas entomophila (strain L48).